We begin with the raw amino-acid sequence, 115 residues long: Large ribosomal subunit protein bL20 (115 aa).

Belongs to the bacterial ribosomal protein bL20 family.

Functionally, binds directly to 23S ribosomal RNA and is necessary for the in vitro assembly process of the 50S ribosomal subunit. It is not involved in the protein synthesizing functions of that subunit. This is Large ribosomal subunit protein bL20 from Chlorobium chlorochromatii (strain CaD3).